We begin with the raw amino-acid sequence, 400 residues long: Large envelope protein (400 aa).

Met1 is modified (N-acetylmethionine). Disordered regions lie at residues 1–54 and 85–116; these read MGGW…HWPE and LTTV…RDSH. Residue Gly2 is the site of N-myristoyl glycine; by host attachment. The tract at residues 2-119 is pre-S1; sequence GGWSSKPRQG…PPLRDSHPQA (118 aa). Residues 2–174 form a pre-S region; the sequence is GGWSSKPRQG…FSRTGDPAPN (173 aa). The Virion surface; in external conformation segment spans residues 2 to 181; it reads GGWSSKPRQG…APNMENTTSG (180 aa). At 2–253 the chain is on the intravirion; in internal conformation side; the sequence is GGWSSKPRQG…PGYRWMCLRR (252 aa). Trp4 carries an N-linked (GlcNAc...) asparagine glycan. Residues 96–106 show a composition bias toward polar residues; it reads STNRQSGRQPT. A pre-S2 region spans residues 120–174; that stretch reads MQWNSTTFHQALLDPRVRGLYFPAGGSSSGTVNPVPTTASPISSIFSRTGDPAPN. The helical transmembrane segment at 182–202 threads the bilayer; the sequence is FLGPLLVLQAGFFLLTRILTI. Topologically, residues 203–253 are intravirion; in external conformation; sequence PQSLDSWWTSLNFLGGAPTCPGQNSQSPTSNHSPTSCPPICPGYRWMCLRR. Residues 254-274 traverse the membrane as a helical segment; it reads FIIFLFILLLCLIFLLVLLDY. Over 275 to 348 the chain is Virion surface; the sequence is QGMLPVCPLL…WASVRFSWLS (74 aa). N-linked (GlcNAc...) asparagine; by host glycosylation is present at Asn320. Residues 349–369 traverse the membrane as a helical segment; that stretch reads LLVPFVQWFAGLSPTVWLSVI. Residues 370–375 lie on the Intravirion side of the membrane; that stretch reads WMMWYW. The helical transmembrane segment at 376–398 threads the bilayer; it reads GPSLYNILSPFLPLLPIFFCLWV. The Virion surface segment spans residues 399 to 400; it reads YI.

It belongs to the orthohepadnavirus major surface antigen family. In its internal form (Li-HBsAg), interacts with the capsid protein and with the isoform S. Interacts with host chaperone CANX. In terms of assembly, associates with host chaperone CANX through its pre-S2 N glycan; this association may be essential for isoform M proper secretion. As to quaternary structure, interacts with isoform L. Interacts with the antigens of satellite virus HDV (HDVAgs); this interaction is required for encapsidation of HDV genomic RNA. Post-translationally, isoform M is N-terminally acetylated by host at a ratio of 90%, and N-glycosylated by host at the pre-S2 region. Myristoylated.

The protein resides in the virion membrane. In terms of biological role, the large envelope protein exists in two topological conformations, one which is termed 'external' or Le-HBsAg and the other 'internal' or Li-HBsAg. In its external conformation the protein attaches the virus to cell receptors and thereby initiating infection. This interaction determines the species specificity and liver tropism. This attachment induces virion internalization predominantly through caveolin-mediated endocytosis. The large envelope protein also assures fusion between virion membrane and endosomal membrane. In its internal conformation the protein plays a role in virion morphogenesis and mediates the contact with the nucleocapsid like a matrix protein. The middle envelope protein plays an important role in the budding of the virion. It is involved in the induction of budding in a nucleocapsid independent way. In this process the majority of envelope proteins bud to form subviral lipoprotein particles of 22 nm of diameter that do not contain a nucleocapsid. The protein is Large envelope protein of Homo sapiens (Human).